The chain runs to 493 residues: Ribosomal protein uS12 methylthiotransferase RimO (493 aa).

The region spanning 5-121 is the MTTase N-terminal domain; that stretch reads RTVALVTLGC…ISDRLQTILN (117 aa). [4Fe-4S] cluster is bound by residues C14, C50, C84, C198, C202, and C205. The Radical SAM core domain maps to 184-415; it reads LGTSPVASVK…QLAEELTSQR (232 aa). The 71-residue stretch at 417–487 folds into the TRAM domain; the sequence is EERVGETLQV…GVDLVAEHHE (71 aa).

The protein belongs to the methylthiotransferase family. RimO subfamily. [4Fe-4S] cluster serves as cofactor.

It localises to the cytoplasm. It carries out the reaction L-aspartate(89)-[ribosomal protein uS12]-hydrogen + (sulfur carrier)-SH + AH2 + 2 S-adenosyl-L-methionine = 3-methylsulfanyl-L-aspartate(89)-[ribosomal protein uS12]-hydrogen + (sulfur carrier)-H + 5'-deoxyadenosine + L-methionine + A + S-adenosyl-L-homocysteine + 2 H(+). Its function is as follows. Catalyzes the methylthiolation of an aspartic acid residue of ribosomal protein uS12. This Streptomyces griseus subsp. griseus (strain JCM 4626 / CBS 651.72 / NBRC 13350 / KCC S-0626 / ISP 5235) protein is Ribosomal protein uS12 methylthiotransferase RimO.